Here is a 400-residue protein sequence, read N- to C-terminus: Phosphoglycerate kinase (400 aa).

Substrate contacts are provided by residues 19–21 (DLN), Arg38, 61–64 (HLGR), Arg124, and Arg161. Residues Lys211, Gly299, Glu330, and 356-359 (GGDS) each bind ATP.

Belongs to the phosphoglycerate kinase family. As to quaternary structure, monomer.

It is found in the cytoplasm. The catalysed reaction is (2R)-3-phosphoglycerate + ATP = (2R)-3-phospho-glyceroyl phosphate + ADP. It functions in the pathway carbohydrate degradation; glycolysis; pyruvate from D-glyceraldehyde 3-phosphate: step 2/5. This Frankia casuarinae (strain DSM 45818 / CECT 9043 / HFP020203 / CcI3) protein is Phosphoglycerate kinase.